We begin with the raw amino-acid sequence, 321 residues long: Tetraacyldisaccharide 4'-kinase (321 aa).

Residue 54-61 (SVGGTGKT) participates in ATP binding.

The protein belongs to the LpxK family.

The catalysed reaction is a lipid A disaccharide + ATP = a lipid IVA + ADP + H(+). The protein operates within glycolipid biosynthesis; lipid IV(A) biosynthesis; lipid IV(A) from (3R)-3-hydroxytetradecanoyl-[acyl-carrier-protein] and UDP-N-acetyl-alpha-D-glucosamine: step 6/6. Its function is as follows. Transfers the gamma-phosphate of ATP to the 4'-position of a tetraacyldisaccharide 1-phosphate intermediate (termed DS-1-P) to form tetraacyldisaccharide 1,4'-bis-phosphate (lipid IVA). This is Tetraacyldisaccharide 4'-kinase from Rickettsia peacockii (strain Rustic).